The chain runs to 138 residues: Large ribosomal subunit protein uL16 (138 aa).

Residues 1 to 15 (MLSPRKVKYRKKQRG) show a composition bias toward basic residues. Residues 1-20 (MLSPRKVKYRKKQRGRLSGE) form a disordered region.

This sequence belongs to the universal ribosomal protein uL16 family. As to quaternary structure, part of the 50S ribosomal subunit.

Its function is as follows. Binds 23S rRNA and is also seen to make contacts with the A and possibly P site tRNAs. The protein is Large ribosomal subunit protein uL16 of Borrelia turicatae (strain 91E135).